Reading from the N-terminus, the 312-residue chain is Methionyl-tRNA formyltransferase (312 aa).

110-113 (SLLP) contributes to the (6S)-5,6,7,8-tetrahydrofolate binding site.

It belongs to the Fmt family.

The enzyme catalyses L-methionyl-tRNA(fMet) + (6R)-10-formyltetrahydrofolate = N-formyl-L-methionyl-tRNA(fMet) + (6S)-5,6,7,8-tetrahydrofolate + H(+). In terms of biological role, attaches a formyl group to the free amino group of methionyl-tRNA(fMet). The formyl group appears to play a dual role in the initiator identity of N-formylmethionyl-tRNA by promoting its recognition by IF2 and preventing the misappropriation of this tRNA by the elongation apparatus. The chain is Methionyl-tRNA formyltransferase from Koribacter versatilis (strain Ellin345).